The chain runs to 189 residues: Thermostable direct hemolysin 1 (189 aa).

The N-terminal stretch at 1-24 (MKHQYFAKKSFLFISMLAAFKTSA) is a signal peptide. Residues Cys175 and Cys185 are joined by a disulfide bond.

Belongs to the TDH hemolysin family. As to quaternary structure, homodimer.

Functionally, bacterial hemolysins are exotoxins that attack blood cell membranes and cause cell rupture by mechanisms not clearly defined. This is Thermostable direct hemolysin 1 (tdh1) from Vibrio parahaemolyticus serotype O3:K6 (strain RIMD 2210633).